The following is a 314-amino-acid chain: Methionyl-tRNA formyltransferase (314 aa).

109–112 is a (6S)-5,6,7,8-tetrahydrofolate binding site; that stretch reads SLLP.

This sequence belongs to the Fmt family.

It carries out the reaction L-methionyl-tRNA(fMet) + (6R)-10-formyltetrahydrofolate = N-formyl-L-methionyl-tRNA(fMet) + (6S)-5,6,7,8-tetrahydrofolate + H(+). Attaches a formyl group to the free amino group of methionyl-tRNA(fMet). The formyl group appears to play a dual role in the initiator identity of N-formylmethionyl-tRNA by promoting its recognition by IF2 and preventing the misappropriation of this tRNA by the elongation apparatus. This Syntrophomonas wolfei subsp. wolfei (strain DSM 2245B / Goettingen) protein is Methionyl-tRNA formyltransferase.